We begin with the raw amino-acid sequence, 46 residues long: Iota-conotoxin-like R11.17 (46 aa).

P2 and P11 each carry 4-hydroxyproline. 4 disulfides stabilise this stretch: C5–C19, C12–C22, C18–C27, and C21–C38. P29 carries the post-translational modification 4-hydroxyproline. F44 carries the post-translational modification D-phenylalanine.

The protein belongs to the conotoxin I1 superfamily. In terms of tissue distribution, expressed by the venom duct.

The protein localises to the secreted. Functionally, iota-conotoxins bind to voltage-gated sodium channels (Nav) and act as agonists by shifting the voltage-dependence of activation to more hyperpolarized levels. Produces general excitatory symptoms. This Conus radiatus (Rayed cone) protein is Iota-conotoxin-like R11.17.